We begin with the raw amino-acid sequence, 254 residues long: Ribosomal protein L11 methyltransferase (254 aa).

Positions 107, 128, 149, 175, and 191 each coordinate S-adenosyl-L-methionine.

Belongs to the methyltransferase superfamily. PrmA family.

It localises to the cytoplasm. The enzyme catalyses L-lysyl-[protein] + 3 S-adenosyl-L-methionine = N(6),N(6),N(6)-trimethyl-L-lysyl-[protein] + 3 S-adenosyl-L-homocysteine + 3 H(+). It carries out the reaction an N-terminal L-alpha-aminoacyl-[protein] + 3 S-adenosyl-L-methionine = an N-terminal trimethyl-L-alpha-aminoacyl-[protein] + 3 S-adenosyl-L-homocysteine + 3 H(+). Methylates ribosomal protein L11. Preferentially recognizes free L11 before its incorporation into 50S subunits. This function is dispensable for growth and thermostability. The chain is Ribosomal protein L11 methyltransferase from Thermus thermophilus (strain ATCC 27634 / DSM 579 / HB8).